Consider the following 76-residue polypeptide: Gallerimycin (76 aa).

Positions 1–19 (MKIAFIVAISLAFLAVTSC) are cleaved as a signal peptide.

Belongs to the invertebrate defensin family.

Has antifungal activity against the entomopathogenic fungus M.nisopliae, but does not display any antifungal activity against S.cerevisiae nor any antimicrobial activity against M.luteus, B.subtilis, and E.coli. In Galleria mellonella (Greater wax moth), this protein is Gallerimycin (LOC113523440).